Reading from the N-terminus, the 557-residue chain is Formate--tetrahydrofolate ligase (557 aa).

Residue 66-73 (TPAGEGKS) participates in ATP binding.

Belongs to the formate--tetrahydrofolate ligase family.

The enzyme catalyses (6S)-5,6,7,8-tetrahydrofolate + formate + ATP = (6R)-10-formyltetrahydrofolate + ADP + phosphate. It participates in one-carbon metabolism; tetrahydrofolate interconversion. In Clostridium botulinum (strain Loch Maree / Type A3), this protein is Formate--tetrahydrofolate ligase.